The sequence spans 66 residues: ATP synthase protein 8 (66 aa).

A helical transmembrane segment spans residues 8–24 (PWPMVIMSMILTLFYIT). N6-acetyllysine; alternate is present on Lys54. An N6-succinyllysine; alternate modification is found at Lys54. Lys57 is modified (N6-acetyllysine).

This sequence belongs to the ATPase protein 8 family. As to quaternary structure, F-type ATPases have 2 components, CF(1) - the catalytic core - and CF(0) - the membrane proton channel. Component of an ATP synthase complex composed of ATP5PB, ATP5MC1, ATP5F1E, ATP5PD, ATP5ME, ATP5PF, ATP5MF, MT-ATP6, MT-ATP8, ATP5F1A, ATP5F1B, ATP5F1D, ATP5F1C, ATP5PO, ATP5MG, ATP5MK and ATP5MJ. Interacts with PRICKLE3.

Its subcellular location is the mitochondrion membrane. Its function is as follows. Mitochondrial membrane ATP synthase (F(1)F(0) ATP synthase or Complex V) produces ATP from ADP in the presence of a proton gradient across the membrane which is generated by electron transport complexes of the respiratory chain. F-type ATPases consist of two structural domains, F(1) - containing the extramembraneous catalytic core and F(0) - containing the membrane proton channel, linked together by a central stalk and a peripheral stalk. During catalysis, ATP synthesis in the catalytic domain of F(1) is coupled via a rotary mechanism of the central stalk subunits to proton translocation. Part of the complex F(0) domain. Minor subunit located with subunit a in the membrane. The protein is ATP synthase protein 8 (MT-ATP8) of Alouatta sara (Bolivian red howler monkey).